A 552-amino-acid chain; its full sequence is (R)-mandelonitrile lyase-like (552 aa).

The N-terminal stretch at 1-28 (MTKRIDSSLLYTALVVLLLLGVVHRSNA) is a signal peptide. N-linked (GlcNAc...) asparagine glycosylation occurs at asparagine 44. 55–82 (DYIIVGGGTAGCPLAATLSQSFRVLLLE) serves as a coordination point for FAD. Residues asparagine 162, asparagine 259, and asparagine 434 are each glycosylated (N-linked (GlcNAc...) asparagine). The active-site Proton acceptor is histidine 492.

It belongs to the GMC oxidoreductase family. Monomer. Requires FAD as cofactor. In terms of processing, glycosylated.

The catalysed reaction is (R)-mandelonitrile = benzaldehyde + hydrogen cyanide. The protein is (R)-mandelonitrile lyase-like of Arabidopsis thaliana (Mouse-ear cress).